Reading from the N-terminus, the 615-residue chain is Prickle planar cell polarity protein 3 (615 aa).

Positions 1-12 (MFARGSRRRRSG) are enriched in basic residues. The disordered stretch occupies residues 1 to 26 (MFARGSRRRRSGRAPPEAEDPDRGQP). Residues 74–182 (SDFQRHSISD…IVRIFPVTIT (109 aa)) form the PET domain. LIM zinc-binding domains follow at residues 184-249 (AICE…CLRP), 250-309 (RCQA…RHAE), and 310-373 (YCDG…SEPT). Disordered regions lie at residues 396 to 567 (ASFS…LGER) and 587 to 615 (TFNS…CIVA). Over residues 405–415 (SETTTKGTSTE) the composition is skewed to polar residues. Phosphoserine occurs at positions 475 and 491. Basic residues predominate over residues 508-531 (PSRRRHHHHNHHHHHNRHPSRRRH). Low complexity predominate over residues 537–555 (GSGSDSESCSSSPSSSSSE). Basic and acidic residues predominate over residues 606 to 615 (QARDKNCIVA).

This sequence belongs to the prickle / espinas / testin family. Interacts with VANGL2 via its C-terminus. The VANGL2-dependent membrane recruitment of PRICKLE3 is a prerequisite for its polarization. Interacts with WTIP. WTIP is involved in the recruitment of PRICKLE3 to the basal body. Interacts with MT-ATP8, a component of the mitochondrial complex V. In terms of tissue distribution, widely expressed.

It is found in the cytoplasm. Its subcellular location is the cell membrane. The protein resides in the mitochondrion. Functionally, involved in the planar cell polarity (PCP) pathway that is essential for the polarization of epithelial cells during morphogenetic processes, including gastrulation and neurulation. PCP is maintained by two molecular modules, the global and the core modules, PRICKLE3 being part of the core module. Distinct complexes of the core module segregate to opposite sides of the cell, where they interact with the opposite complex in the neighboring cell at or near the adherents junctions. Involved in the organization of the basal body. Involved in cilia growth and positioning. Required for proper assembly, stability, and function of mitochondrial membrane ATP synthase (mitochondrial complex V). The sequence is that of Prickle planar cell polarity protein 3 from Homo sapiens (Human).